The primary structure comprises 144 residues: Large ribosomal subunit protein uL13 (144 aa).

The protein belongs to the universal ribosomal protein uL13 family. Part of the 50S ribosomal subunit.

In terms of biological role, this protein is one of the early assembly proteins of the 50S ribosomal subunit, although it is not seen to bind rRNA by itself. It is important during the early stages of 50S assembly. This Moorella thermoacetica (strain ATCC 39073 / JCM 9320) protein is Large ribosomal subunit protein uL13.